Here is a 52-residue protein sequence, read N- to C-terminus: Conotoxin Cal6.25 (52 aa).

The signal sequence occupies residues 1–22 (MKLTHVLIVAVLVLTVCHLTMA). 3 cysteine pairs are disulfide-bonded: Cys-24–Cys-41, Cys-31–Cys-45, and Cys-40–Cys-50.

As to expression, expressed by the venom duct.

The protein localises to the secreted. Probable neurotoxin. The chain is Conotoxin Cal6.25 from Californiconus californicus (California cone).